A 376-amino-acid chain; its full sequence is Flagellar P-ring protein 2 (376 aa).

Positions 1-19 (MTRLLLALILVVSAASAQA) are cleaved as a signal peptide.

Belongs to the FlgI family. In terms of assembly, the basal body constitutes a major portion of the flagellar organelle and consists of four rings (L,P,S, and M) mounted on a central rod.

It localises to the periplasm. The protein resides in the bacterial flagellum basal body. In terms of biological role, assembles around the rod to form the L-ring and probably protects the motor/basal body from shearing forces during rotation. This chain is Flagellar P-ring protein 2, found in Bradyrhizobium diazoefficiens (strain JCM 10833 / BCRC 13528 / IAM 13628 / NBRC 14792 / USDA 110).